We begin with the raw amino-acid sequence, 658 residues long: Translin-associated factor X-interacting protein 1 (658 aa).

2 coiled-coil regions span residues 144 to 184 and 230 to 295; these read EISL…AEEY and ALKM…LMQL.

Interacts with TSNAX.

Its subcellular location is the cytoplasm. It is found in the perinuclear region. In terms of biological role, possible role in spermatogenesis. The protein is Translin-associated factor X-interacting protein 1 of Homo sapiens (Human).